We begin with the raw amino-acid sequence, 648 residues long: Acetyl-coenzyme A synthetase (648 aa).

CoA contacts are provided by residues 191 to 194 (RGGR), threonine 310, and asparagine 334. ATP contacts are provided by residues 386-388 (GEP), 410-415 (DTWWQT), aspartate 499, and arginine 514. Residue serine 522 coordinates CoA. ATP is bound at residue arginine 525. Mg(2+) is bound by residues valine 536, histidine 538, and isoleucine 541. Residue arginine 583 coordinates CoA. Position 608 is an N6-acetyllysine (lysine 608).

It belongs to the ATP-dependent AMP-binding enzyme family. Mg(2+) is required as a cofactor. Acetylated. Deacetylation by the SIR2-homolog deacetylase activates the enzyme.

It carries out the reaction acetate + ATP + CoA = acetyl-CoA + AMP + diphosphate. Its function is as follows. Catalyzes the conversion of acetate into acetyl-CoA (AcCoA), an essential intermediate at the junction of anabolic and catabolic pathways. AcsA undergoes a two-step reaction. In the first half reaction, AcsA combines acetate with ATP to form acetyl-adenylate (AcAMP) intermediate. In the second half reaction, it can then transfer the acetyl group from AcAMP to the sulfhydryl group of CoA, forming the product AcCoA. The protein is Acetyl-coenzyme A synthetase of Aeromonas salmonicida (strain A449).